A 1024-amino-acid polypeptide reads, in one-letter code: Hemolysin, plasmid (1024 aa).

A compositionally biased stretch (polar residues) spans 20–32 (AANKLHSAGQSTK). A disordered region spans residues 20-39 (AANKLHSAGQSTKDALKKAA). Transmembrane regions (helical) follow at residues 238-260 (IGAG…ILSN), 268-327 (KAAA…LSIA), and 365-411 (DASL…GILE). N6-myristoyl lysine attachment occurs at residues K564 and K690. Hemolysin-type calcium-binding repeat units lie at residues 732-749 (FGSK…DDLI), 750-767 (EGND…NDTL), 768-785 (SGGN…NDKL), 786-803 (IGVA…DDEF), 816-833 (FGGK…ADLL), and 834-851 (DGGE…NDIY).

The protein belongs to the RTX prokaryotic toxin (TC 1.C.11) family. In terms of processing, myristoylated by HlyC; the toxin only becomes active when modified. Mainly myristoylated, while a minor fraction is acylated with pentadecanoyl (C15:0; 26%) and heptadecanoyl (C17:0; 6%) fatty acyl groups. Fatty acylation is involved in binding to host membranes and promotes the irreversible insertion of Hemolysin into the host cell membrane. Can be activated by both myristoylation and palmitoylation, but HlyC catalyzes lysine myristoylation.

The protein localises to the secreted. It is found in the host cell membrane. Functionally, bacterial hemolysins are exotoxins that attack blood cell membranes and cause cell rupture by forming a pore. The polypeptide is Hemolysin, plasmid (Escherichia coli).